Here is a 467-residue protein sequence, read N- to C-terminus: Ribosomal protein uS12 methylthiotransferase RimO (467 aa).

An MTTase N-terminal domain is found at 1–110; sequence MDLHGCAKNQ…LPQLIDSMFP (110 aa). [4Fe-4S] cluster-binding residues include cysteine 6, cysteine 42, cysteine 73, cysteine 153, cysteine 157, and cysteine 160. The region spanning 139–386 is the Radical SAM core domain; sequence LNFPRSTYIK…QNAQTSITEK (248 aa). A TRAM domain is found at 389–467; that stretch reads DSFIGKEIEV…NGFDLEAVAV (79 aa).

This sequence belongs to the methylthiotransferase family. RimO subfamily. [4Fe-4S] cluster serves as cofactor.

It is found in the cytoplasm. The enzyme catalyses L-aspartate(89)-[ribosomal protein uS12]-hydrogen + (sulfur carrier)-SH + AH2 + 2 S-adenosyl-L-methionine = 3-methylsulfanyl-L-aspartate(89)-[ribosomal protein uS12]-hydrogen + (sulfur carrier)-H + 5'-deoxyadenosine + L-methionine + A + S-adenosyl-L-homocysteine + 2 H(+). Its function is as follows. Catalyzes the methylthiolation of an aspartic acid residue of ribosomal protein uS12. The chain is Ribosomal protein uS12 methylthiotransferase RimO from Treponema denticola (strain ATCC 35405 / DSM 14222 / CIP 103919 / JCM 8153 / KCTC 15104).